The chain runs to 307 residues: Transmembrane and coiled-coil domain-containing protein 5B (307 aa).

The stretch at 20 to 212 (TLEAIKQNLK…SKAQNDSSQV (193 aa)) forms a coiled coil. The helical transmembrane segment at 246 to 268 (YLFFMVMIVIRLLGYVFFHLQYV) threads the bilayer.

This sequence belongs to the TMCO5 family.

The protein localises to the membrane. This is Transmembrane and coiled-coil domain-containing protein 5B (Tmco5b) from Mus musculus (Mouse).